Consider the following 123-residue polypeptide: Molluscan insulin-related peptide 1 (123 aa).

A signal peptide spans 1-31 (MAGVRLVFTKAFMVTVLLTLLLNIGVKPAEG). A Pyrrolidone carboxylic acid modification is found at Gln32. 3 disulfide bridges follow: Cys48/Cys109, Cys60/Cys122, and Cys108/Cys113. A propeptide spanning residues 68 to 69 (MV) is cleaved from the precursor. Pyrrolidone carboxylic acid is present on Gln99.

Belongs to the insulin family. As to quaternary structure, heterodimer of a B chain and an A chain linked by two disulfide bonds. In terms of tissue distribution, expressed in the cerebral light-green cells which are giant neuroendocrines cells involved in the control of growth.

Its subcellular location is the cytoplasmic vesicle. It is found in the secretory vesicle. This chain is Molluscan insulin-related peptide 1, found in Lymnaea stagnalis (Great pond snail).